The following is an 806-amino-acid chain: Polyribonucleotide nucleotidyltransferase (806 aa).

Mg(2+)-binding residues include D488 and D494. The region spanning 555 to 614 (PQIRTVQIPTDKIRDLIGPGGKTIRGIIEATQVKIDVDDTGRVNIASSDEEGLKKALAMI) is the KH domain. The S1 motif domain occupies 624-691 (GKTYLGKVVR…EGNRIKLSRK (68 aa)). Residues 698–806 (RQKLGLPEPG…QGGGGNRGPQ (109 aa)) are disordered. Residues 704 to 717 (PEPGAEAPAAAEGQ) show a composition bias toward low complexity. The span at 738 to 757 (GGEDFDDFDEEGGEGEGEDE) shows a compositional bias: acidic residues. A compositionally biased stretch (basic and acidic residues) spans 758–774 (NFNREDTPNSAPGERRP). Residues 783-792 (RGRRRRRGRG) are compositionally biased toward basic residues. Over residues 793–806 (RGPGQGGGGNRGPQ) the composition is skewed to gly residues.

It belongs to the polyribonucleotide nucleotidyltransferase family. Mg(2+) serves as cofactor.

It localises to the cytoplasm. It carries out the reaction RNA(n+1) + phosphate = RNA(n) + a ribonucleoside 5'-diphosphate. Functionally, involved in mRNA degradation. Catalyzes the phosphorolysis of single-stranded polyribonucleotides processively in the 3'- to 5'-direction. This chain is Polyribonucleotide nucleotidyltransferase, found in Acidobacterium capsulatum (strain ATCC 51196 / DSM 11244 / BCRC 80197 / JCM 7670 / NBRC 15755 / NCIMB 13165 / 161).